The primary structure comprises 193 residues: MISLMAKIRQEHQSIAEKVAELSLETREFLSVTTAKRQEQAEKQAQELQAFYKDLQETSQQFLSETAQARIAQAEKQAQELLAFHKELQETSQQFLSATAQARIAQAEKQAQELLAFYQEVRETSQQFLSATAQARIAQAEKQAQELLAFHKELQETSQQFLSATADARTAQAKEQKESLLKFRQDLFVSIFG.

5 repeats span residues 19-51, 52-84, 85-117, 118-150, and 151-183; these read VAEL…LQAF, YKDL…LLAF, HKEL…LLAF, YQEV…LLAF, and HKEL…LLKF. The tract at residues 19–183 is 5 X 33 AA tandem repeats; that stretch reads VAELSLETRE…KEQKESLLKF (165 aa).

It belongs to the gas vesicle GvpC family.

It localises to the gas vesicle. In terms of biological role, confers stability, involved in shaping gas vesicles (GV), hollow, gas-filled proteinaceous nanostructures. During planktonic growth they allow positioning of the organism at a favorable depth for light or nutrient acquisition. The ratio of GvpA:GvpC is estimated to be 25:1. GvpC strengthens the GV wall, probably by connecting several GvpA proteins in the same and/or adjacent ribs. Removal of GvpC by SDS reduces the critical collapse pressure (CCP) of stored gas vesicles from 0.23 Mpa to 0.08 MPa. Removal of GvpC by urea reduces CCP of freshly isolated GVs from 0.550 MPa to 0.190 MPa; addition of recombinant GvpC restores CCP to 0.508 MPa. As the turgor pressure in this species is usually 0.35 MPa (plus the water column pressure in its growth environment), this protein is essential for GV formation. In Dolichospermum flosaquae (Anabaena flos-aquae), this protein is Gas vesicle protein C.